A 494-amino-acid chain; its full sequence is Glycerol kinase (494 aa).

Residue threonine 13 coordinates ADP. ATP-binding residues include threonine 13, threonine 14, and serine 15. Threonine 13 serves as a coordination point for sn-glycerol 3-phosphate. Arginine 17 is an ADP binding site. Residues arginine 83, glutamate 84, tyrosine 135, and aspartate 244 each coordinate sn-glycerol 3-phosphate. Glycerol is bound by residues arginine 83, glutamate 84, tyrosine 135, aspartate 244, and glutamine 245. ADP contacts are provided by threonine 266 and glycine 309. 4 residues coordinate ATP: threonine 266, glycine 309, glutamine 313, and glycine 410. Residues glycine 410 and asparagine 414 each coordinate ADP.

Belongs to the FGGY kinase family.

The enzyme catalyses glycerol + ATP = sn-glycerol 3-phosphate + ADP + H(+). The protein operates within polyol metabolism; glycerol degradation via glycerol kinase pathway; sn-glycerol 3-phosphate from glycerol: step 1/1. Its activity is regulated as follows. Inhibited by fructose 1,6-bisphosphate (FBP). Functionally, key enzyme in the regulation of glycerol uptake and metabolism. Catalyzes the phosphorylation of glycerol to yield sn-glycerol 3-phosphate. The polypeptide is Glycerol kinase (Shewanella oneidensis (strain ATCC 700550 / JCM 31522 / CIP 106686 / LMG 19005 / NCIMB 14063 / MR-1)).